The chain runs to 4299 residues: DNA-dependent protein kinase catalytic subunit (4299 aa).

Residues 551–590 (KDLNSTIKKENNNNNNNKNKNNNNNQTLTKEEISKSIKKL) are a coiled coil. 4 disordered regions span residues 557–577 (IKKE…NNQT), 613–633 (DEND…DQDN), 878–917 (NSSD…MKFK), and 1206–1230 (SSSK…EDGT). Low complexity-rich tracts occupy residues 562–575 (NNNN…NNNN), 617–631 (NNSN…NNDQ), 878–893 (NSSD…IDSG), and 1206–1226 (SSSK…NNNS). At serine 2789 the chain carries Phosphoserine; by autocatalysis. Phosphothreonine; by autocatalysis occurs at positions 2814 and 2822. The span at 2832–2867 (SSSQSYGGTNNNTGSSQLSSSSSSSGSQSSSQNNSS) shows a compositional bias: low complexity. Disordered regions lie at residues 2832–2881 (SSSQ…PKLI) and 3535–3559 (TTSS…SSSQ). Positions 3031-3707 (KIKDISLNSN…YFPFKISSEQ (677 aa)) constitute an FAT domain. The region spanning 3887 to 4226 (FDTNVLVMGS…AKKKLELVNP (340 aa)) is the PI3K/PI4K catalytic domain. Positions 3893–3899 (VMGSLRK) are G-loop. Residues 4092–4100 (GIGDRHLEN) form a catalytic loop region. Positions 4112–4137 (GIDFGHAFGTATQFLPIPELMPFRLT) are activation loop. The FATC domain occupies 4267–4299 (VCSSVKEQIDCLIDQSTDPNILSRAWVGWNGAL).

This sequence belongs to the PI3/PI4-kinase family. DNAPK subfamily. In terms of processing, may be phosphorylated upon DNA damage. Could be autophosphorylated. Autophosphorylation induces a conformational change that leads to remodeling of the DNA-PK complex, requisite for efficient end processing and DNA repair. Post-translationally, autophosphorylated on Ser-2789, Thr-2814 and Thr-2822. Ser-2789 is a DNA damage-inducible phosphorylation site (inducible with ionizing radiation, IR).

The protein resides in the nucleus. It localises to the nucleolus. It carries out the reaction L-seryl-[protein] + ATP = O-phospho-L-seryl-[protein] + ADP + H(+). The catalysed reaction is L-threonyl-[protein] + ATP = O-phospho-L-threonyl-[protein] + ADP + H(+). Inhibited by wortmannin. Activity of the enzyme seems to be attenuated by autophosphorylation. Its function is as follows. Serine/threonine-protein kinase that acts as a molecular sensor for DNA damage. Is recruited to DNA ends by the Ku70/Ku80 heterodimer and is involved in DNA non-homologous end joining (NHEJ) required for double-strand break (DSB) repair and V(D)J recombination. This activity is only apparent when DNA damage is administered in G1 phase of the cell cycle. Required for efficient signaling of DNA double-stranded breaks via phosphorylation of H2AX during G1. This Dictyostelium discoideum (Social amoeba) protein is DNA-dependent protein kinase catalytic subunit (dnapkcs).